The sequence spans 372 residues: 4-hydroxybenzoate polyprenyltransferase, mitochondrial (372 aa).

Residues 1-42 (MFIWQRKSILLGRSILGSGRVTVAGIIGSSRKRYTSSSSSSS) constitute a mitochondrion transit peptide. Helical transmembrane passes span 92 to 112 (PVGT…GAMM), 114 to 134 (GATL…ALVM), 171 to 191 (ALVF…LLPA), 193 to 213 (CWWL…FKRF), 229 to 249 (ALLG…PLYL), 298 to 318 (IALL…GFIG), and 352 to 372 (TGLY…FGFL).

It belongs to the UbiA prenyltransferase family. It depends on Mg(2+) as a cofactor.

The protein localises to the mitochondrion inner membrane. It catalyses the reaction an all-trans-polyprenyl diphosphate + 4-hydroxybenzoate = a 4-hydroxy-3-(all-trans-polyprenyl)benzoate + diphosphate. It participates in cofactor biosynthesis; ubiquinone biosynthesis. In terms of biological role, catalyzes the prenylation of para-hydroxybenzoate (PHB) with an all-trans polyprenyl group. Mediates the second step in the final reaction sequence of coenzyme Q (CoQ) biosynthesis, which is the condensation of the polyisoprenoid side chain with PHB, generating the first membrane-bound Q intermediate. This Saccharomyces cerevisiae (strain ATCC 204508 / S288c) (Baker's yeast) protein is 4-hydroxybenzoate polyprenyltransferase, mitochondrial.